The chain runs to 278 residues: Short-chain dehydrogenase/reductase eupG (278 aa).

Leu19, Asp71, and Asn98 together coordinate NADP(+). The Proton donor role is filled by Ser155. The NADP(+) site is built by Tyr188, Lys192, and Thr223. The active-site Proton acceptor is Tyr188. Lys192 serves as the catalytic Lowers pKa of active site Tyr.

Belongs to the short-chain dehydrogenases/reductases (SDR) family.

Its pathway is secondary metabolite biosynthesis; terpenoid biosynthesis. Short-chain dehydrogenase/reductase; part of the gene cluster that mediates the biosynthesis of eupenifeldin, a bistropolone meroterpenoid that acts as an antitumor agent. The first step of eupenifeldin biosynthesis is the biosynthesis of 3-methylorcinaldehyde performed by the non-reducing polyketide synthase eupA. Oxidative dearomatization of 3-methylorcinaldehyde likely catalyzed by the FAD-dependent monooxygenase eupB is followed by oxidative ring expansion by the 2-oxoglutarate-dependent dioxygenase eupC to provide the first tropolone metabolite, tropolone stipitaldehyde. In parallel, generation of sesquiterpene alpha-humulene from farnesylpyrophosphate (FPP) is catalyzed by the terpene cyclase eupE. The cytochrome P450 monooxygenase eupD then hydroxylates humulene to humulenol. The putative Diels-Alderase eupF probably catalyzes the formation of the tropolone-humulene skeleton by linking humulenol and the polyketide moiety. The short-chain dehydrogenase/reductase eupG and the flavin-dependent monooxygenase eupH are also essential for eupenifeldin biosynthesis and are likely the additional decorating enzymes of the tropolone-humulene skeleton to produce final eupenifeldin or derivatives. In Phoma sp, this protein is Short-chain dehydrogenase/reductase eupG.